Here is a 67-residue protein sequence, read N- to C-terminus: uncharacterized protein (67 aa).

This is an uncharacterized protein from Saccharomyces cerevisiae (strain ATCC 204508 / S288c) (Baker's yeast).